A 108-amino-acid polypeptide reads, in one-letter code: Heme-degrading monooxygenase HmoA (108 aa).

The ABM domain maps to 2 to 95 (FVQLRKMTVK…DYLISTEVSM (94 aa)). His-76 is a heme binding site.

It belongs to the antibiotic biosynthesis monooxygenase family. In terms of assembly, homodimer.

The protein localises to the cytoplasm. The enzyme catalyses heme b + 3 reduced [NADPH--hemoprotein reductase] + 3 O2 = biliverdin IXalpha + CO + Fe(2+) + 3 oxidized [NADPH--hemoprotein reductase] + 3 H2O + H(+). Functionally, allows bacterial pathogens to use the host heme as an iron source. Catalyzes the oxidative degradation of the heme macrocyclic porphyrin ring in the presence of a suitable electron donor such as ascorbate or NADPH--cytochrome P450 reductase, with subsequent release of free iron. The polypeptide is Heme-degrading monooxygenase HmoA (hmoA) (Bacillus subtilis (strain 168)).